A 241-amino-acid polypeptide reads, in one-letter code: Large ribosomal subunit protein uL3 (241 aa).

Position 157 is an N5-methylglutamine (Gln-157).

The protein belongs to the universal ribosomal protein uL3 family. In terms of assembly, part of the 50S ribosomal subunit. Forms a cluster with proteins L14 and L19. Post-translationally, methylated by PrmB.

In terms of biological role, one of the primary rRNA binding proteins, it binds directly near the 3'-end of the 23S rRNA, where it nucleates assembly of the 50S subunit. The polypeptide is Large ribosomal subunit protein uL3 (Vesicomyosocius okutanii subsp. Calyptogena okutanii (strain HA)).